Consider the following 218-residue polypeptide: Probable 3-keto-L-gulonate-6-phosphate decarboxylase (218 aa).

Aspartate 11 contacts substrate. Mg(2+) is bound by residues glutamate 33 and aspartate 62. Arginine 194 is a substrate binding site.

This sequence belongs to the HPS/KGPDC family. KGPDC subfamily. Mg(2+) serves as cofactor.

It carries out the reaction 3-dehydro-L-gulonate 6-phosphate + H(+) = L-xylulose 5-phosphate + CO2. The protein operates within cofactor degradation; L-ascorbate degradation; D-xylulose 5-phosphate from L-ascorbate: step 2/4. Functionally, catalyzes the decarboxylation of 3-keto-L-gulonate-6-P into L-xylulose-5-P. Is involved in the anaerobic L-ascorbate utilization. The chain is Probable 3-keto-L-gulonate-6-phosphate decarboxylase (ulaD) from Mycoplasma pneumoniae (strain ATCC 29342 / M129 / Subtype 1) (Mycoplasmoides pneumoniae).